The primary structure comprises 21 residues: RQRVEELSKFSKKGAAARRRK.

Positions 1-21 (RQRVEELSKFSKKGAAARRRK) are disordered. Over residues 10 to 21 (FSKKGAAARRRK) the composition is skewed to basic residues.

It localises to the secreted. Strong antimicrobial activity against several Gram-positive and Gram-negative bacteria and fungi. The chain is Misgurin from Misgurnus anguillicaudatus (Oriental weatherloach).